A 109-amino-acid polypeptide reads, in one-letter code: MSDAGRKGFGEKASEALKPDSQKSYAEQGKEYITDKADKVAGKVQPEDNKGVFQGVHDSAEKGKDNAEGQGESLADQARDYMGAAKSKLNDAVEYVSGRVHGEEDPTKK.

A compositionally biased stretch (basic and acidic residues) spans 1–21 (MSDAGRKGFGEKASEALKPDS). The segment at 1 to 82 (MSDAGRKGFG…SLADQARDYM (82 aa)) is disordered. Phosphoserine; by ATM or ATR is present on Ser21. Position 24 is a phosphoserine (Ser24). Basic and acidic residues-rich tracts occupy residues 28-50 (QGKE…EDNK) and 58-67 (DSAEKGKDNA). 3 positions are modified to phosphoserine: Ser59, Ser73, and Ser97.

It to S.pombe hsp9 and C.albicans WH11.

Functionally, may play a role in a switch from carbohydrate utilizing metabolism to fatty acid utilizing metabolism. In Saccharomyces cerevisiae (strain ATCC 204508 / S288c) (Baker's yeast), this protein is 12 kDa heat shock protein (HSP12).